We begin with the raw amino-acid sequence, 325 residues long: MTVAVVGCGRIGAMYAHHLDALGPHHLVCVDAEPARAEKLAQETASATVAASVGELVARGCDAALVTAGTTAHPELVEALVEAGVPTLCEKPLAIDLPRTEALGTLAERHGVPLWVGFQRHFDPGFADLRARTVAGRLGRVQLLRLVSHDVSPPPVDRLRQSGTVFTDLMLHDFDMVRWLTGREIVQVVADGAALSCPELADIGDFDTVTAMVRLDDDTLGVLSAGRWQPLGYDVRAEVLGERGNLENGPTGANAPGAGGEAPRFRGYWDRFATAYRAQVRAFLTMAAGGPADPAAGTWRDSHDALRCALAAERSATSGSVPVAP.

The protein belongs to the Gfo/Idh/MocA family.

It carries out the reaction myo-inositol + NAD(+) = myo-inosose-5 + NADH + H(+). Its pathway is antibiotic biosynthesis. Its function is as follows. Dehydrogenase involved in the biosynthesis of the aminocyclitol moiety of hygromycin A, a broad-spectrum antibiotic. Catalyzes the NAD(+)-dependent oxidation of myo-inositol to myo-inosose-5 (neo-inosose). Shows reduced activity with scyllo-inositol, minimal activity with L-chiro-inositol and no activity with D-glucose, D-chiro-inositol, epi-inositol, muco-inositol and allo-inositol. Is specific for NAD(+) and cannot use NADP(+). The chain is Myo-inositol dehydrogenase Hyg17 from Streptomyces leeuwenhoekii.